The sequence spans 273 residues: MLTKRIIPCLDVTLDASGGTVVKGVEFVDLKKAGDPVDLAKRYNEQGADELVFLDITASHEGRSTMIDVIERTANEVFIPLTVGGGINSVEDVRQILRAGADKVSVNTAAVKNPEFIREASNIFGSQCIVTAIDCKRNLDVENNQDKTILELEDGTLAWYEVVIYGGREPTGLDTVQWAKKVEELGSGEILLTSMNRDGTYDGFDIPITKKLSEELDIPIIASGGVGNPEHMYKGFVDGKADAGLAASIFHFGEYTVRDVKEALRAKNIPVRL.

Active-site residues include D11 and D134.

It belongs to the HisA/HisF family. Heterodimer of HisH and HisF.

The protein resides in the cytoplasm. It catalyses the reaction 5-[(5-phospho-1-deoxy-D-ribulos-1-ylimino)methylamino]-1-(5-phospho-beta-D-ribosyl)imidazole-4-carboxamide + L-glutamine = D-erythro-1-(imidazol-4-yl)glycerol 3-phosphate + 5-amino-1-(5-phospho-beta-D-ribosyl)imidazole-4-carboxamide + L-glutamate + H(+). Its pathway is amino-acid biosynthesis; L-histidine biosynthesis; L-histidine from 5-phospho-alpha-D-ribose 1-diphosphate: step 5/9. IGPS catalyzes the conversion of PRFAR and glutamine to IGP, AICAR and glutamate. The HisF subunit catalyzes the cyclization activity that produces IGP and AICAR from PRFAR using the ammonia provided by the HisH subunit. This Methanococcoides burtonii (strain DSM 6242 / NBRC 107633 / OCM 468 / ACE-M) protein is Imidazole glycerol phosphate synthase subunit HisF.